Consider the following 328-residue polypeptide: D-cysteine desulfhydrase (328 aa).

Position 51 is an N6-(pyridoxal phosphate)lysine (Lys-51).

This sequence belongs to the ACC deaminase/D-cysteine desulfhydrase family. Homodimer. It depends on pyridoxal 5'-phosphate as a cofactor.

The enzyme catalyses D-cysteine + H2O = hydrogen sulfide + pyruvate + NH4(+) + H(+). Its function is as follows. Catalyzes the alpha,beta-elimination reaction of D-cysteine and of several D-cysteine derivatives. It could be a defense mechanism against D-cysteine. The polypeptide is D-cysteine desulfhydrase (Escherichia coli O9:H4 (strain HS)).